Here is a 311-residue protein sequence, read N- to C-terminus: Aspartate carbamoyltransferase catalytic subunit (311 aa).

The carbamoyl phosphate site is built by Arg55 and Thr56. Lys85 contacts L-aspartate. Residues Arg106, His135, and Gln138 each coordinate carbamoyl phosphate. The L-aspartate site is built by Arg168 and Arg230. Residues Leu268 and Pro269 each contribute to the carbamoyl phosphate site.

This sequence belongs to the aspartate/ornithine carbamoyltransferase superfamily. ATCase family. In terms of assembly, heterododecamer (2C3:3R2) of six catalytic PyrB chains organized as two trimers (C3), and six regulatory PyrI chains organized as three dimers (R2).

It carries out the reaction carbamoyl phosphate + L-aspartate = N-carbamoyl-L-aspartate + phosphate + H(+). The protein operates within pyrimidine metabolism; UMP biosynthesis via de novo pathway; (S)-dihydroorotate from bicarbonate: step 2/3. Its function is as follows. Catalyzes the condensation of carbamoyl phosphate and aspartate to form carbamoyl aspartate and inorganic phosphate, the committed step in the de novo pyrimidine nucleotide biosynthesis pathway. In Yersinia enterocolitica serotype O:8 / biotype 1B (strain NCTC 13174 / 8081), this protein is Aspartate carbamoyltransferase catalytic subunit.